The sequence spans 486 residues: Replication factor C large subunit (486 aa).

46-53 (GPPGSGKT) contributes to the ATP binding site. A disordered region spans residues 419–486 (VKKETPKKTE…KKQATLDSFF (68 aa)). 2 stretches are compositionally biased toward basic and acidic residues: residues 420-432 (KKETPKKTEKPKE) and 442-480 (RISEPPKEPLKEVIEETLEKSVEKADTKEEKKKDPKKQA).

This sequence belongs to the activator 1 small subunits family. RfcL subfamily. Heteromultimer composed of small subunits (RfcS) and large subunits (RfcL).

In terms of biological role, part of the RFC clamp loader complex which loads the PCNA sliding clamp onto DNA. The protein is Replication factor C large subunit of Methanococcus maripaludis (strain DSM 14266 / JCM 13030 / NBRC 101832 / S2 / LL).